A 624-amino-acid chain; its full sequence is (-)-beta-phellandrene synthase 4, chloroplastic (624 aa).

Residues 1–48 constitute a chloroplast transit peptide; sequence MAIVSSVPLASKSCLHKSLISSIHKLKPFCRTIPTLGMSRPGKSVMPS. Residues 41 to 60 form a disordered region; the sequence is PGKSVMPSMSMSSPVSDDGV. Residues 44–56 are compositionally biased toward low complexity; that stretch reads SVMPSMSMSSPVS. Mg(2+)-binding residues include D375, D379, and D527. Positions 375–379 match the DDXXD motif motif; that stretch reads DDMYD.

The protein belongs to the terpene synthase family. Tpsd subfamily. It depends on Mg(2+) as a cofactor. Mn(2+) serves as cofactor.

The protein resides in the plastid. It is found in the chloroplast. It carries out the reaction (2E)-geranyl diphosphate = (-)-beta-phellandrene + diphosphate. Its pathway is terpene metabolism; oleoresin biosynthesis. Terpene synthase (TPS) involved in the biosynthesis of monoterpene natural products included in conifer oleoresin secretions and volatile emissions; these compounds contribute to biotic and abiotic stress defense against herbivores and pathogens. Catalyzes the conversion of (2E)-geranyl diphosphate (GPP) to (-)-beta-phellandrene. The chain is (-)-beta-phellandrene synthase 4, chloroplastic from Picea sitchensis (Sitka spruce).